We begin with the raw amino-acid sequence, 638 residues long: 1-deoxy-D-xylulose-5-phosphate synthase (638 aa).

Thiamine diphosphate is bound by residues histidine 79 and 120–122 (AHS). Residue aspartate 151 coordinates Mg(2+). Residues 152–153 (GA), asparagine 180, tyrosine 289, and glutamate 371 each bind thiamine diphosphate. Residue asparagine 180 coordinates Mg(2+).

The protein belongs to the transketolase family. DXPS subfamily. Homodimer. Mg(2+) serves as cofactor. Requires thiamine diphosphate as cofactor.

The enzyme catalyses D-glyceraldehyde 3-phosphate + pyruvate + H(+) = 1-deoxy-D-xylulose 5-phosphate + CO2. It functions in the pathway metabolic intermediate biosynthesis; 1-deoxy-D-xylulose 5-phosphate biosynthesis; 1-deoxy-D-xylulose 5-phosphate from D-glyceraldehyde 3-phosphate and pyruvate: step 1/1. In terms of biological role, catalyzes the acyloin condensation reaction between C atoms 2 and 3 of pyruvate and glyceraldehyde 3-phosphate to yield 1-deoxy-D-xylulose-5-phosphate (DXP). This Rhizobium johnstonii (strain DSM 114642 / LMG 32736 / 3841) (Rhizobium leguminosarum bv. viciae) protein is 1-deoxy-D-xylulose-5-phosphate synthase.